The following is a 367-amino-acid chain: Chorismate synthase (367 aa).

Residues 41 to 60 form a disordered region; sequence FTHDLQRRASGKSRHTSARR. 2 residues coordinate NADP(+): Arg48 and Arg54. FMN contacts are provided by residues 125–127, 238–239, Gly278, 293–297, and Arg319; these read RSS, NA, and KPTSS.

It belongs to the chorismate synthase family. Homotetramer. FMNH2 serves as cofactor.

The enzyme catalyses 5-O-(1-carboxyvinyl)-3-phosphoshikimate = chorismate + phosphate. It functions in the pathway metabolic intermediate biosynthesis; chorismate biosynthesis; chorismate from D-erythrose 4-phosphate and phosphoenolpyruvate: step 7/7. In terms of biological role, catalyzes the anti-1,4-elimination of the C-3 phosphate and the C-6 proR hydrogen from 5-enolpyruvylshikimate-3-phosphate (EPSP) to yield chorismate, which is the branch point compound that serves as the starting substrate for the three terminal pathways of aromatic amino acid biosynthesis. This reaction introduces a second double bond into the aromatic ring system. The polypeptide is Chorismate synthase (Xanthomonas euvesicatoria pv. vesicatoria (strain 85-10) (Xanthomonas campestris pv. vesicatoria)).